The chain runs to 401 residues: Enolase (401 aa).

Glutamine 154 provides a ligand contact to (2R)-2-phosphoglycerate. Glutamate 196 (proton donor) is an active-site residue. 3 residues coordinate Mg(2+): aspartate 232, glutamate 275, and aspartate 302. (2R)-2-phosphoglycerate contacts are provided by lysine 327, arginine 356, serine 357, and lysine 378. Lysine 327 functions as the Proton acceptor in the catalytic mechanism.

Belongs to the enolase family. Mg(2+) serves as cofactor.

The protein localises to the cytoplasm. It localises to the secreted. Its subcellular location is the cell surface. It carries out the reaction (2R)-2-phosphoglycerate = phosphoenolpyruvate + H2O. Its pathway is carbohydrate degradation; glycolysis; pyruvate from D-glyceraldehyde 3-phosphate: step 4/5. Catalyzes the reversible conversion of 2-phosphoglycerate (2-PG) into phosphoenolpyruvate (PEP). It is essential for the degradation of carbohydrates via glycolysis. In Haloarcula marismortui (strain ATCC 43049 / DSM 3752 / JCM 8966 / VKM B-1809) (Halobacterium marismortui), this protein is Enolase.